Consider the following 420-residue polypeptide: 3-isopropylmalate dehydratase large subunit (420 aa).

3 residues coordinate [4Fe-4S] cluster: Cys300, Cys360, and Cys363.

Belongs to the aconitase/IPM isomerase family. LeuC type 2 subfamily. In terms of assembly, heterodimer of LeuC and LeuD. It depends on [4Fe-4S] cluster as a cofactor.

The catalysed reaction is (2R,3S)-3-isopropylmalate = (2S)-2-isopropylmalate. Its pathway is amino-acid biosynthesis; L-leucine biosynthesis; L-leucine from 3-methyl-2-oxobutanoate: step 2/4. Catalyzes the isomerization between 2-isopropylmalate and 3-isopropylmalate, via the formation of 2-isopropylmaleate. The protein is 3-isopropylmalate dehydratase large subunit of Heliobacterium modesticaldum (strain ATCC 51547 / Ice1).